The following is a 299-amino-acid chain: MKIQAGQLGLDDNDVPGPLPDTDSKPSSQSQNDTPMFKLGNFESPVLKELSRRTVNKEMETQRIMTNVIAFAFWNLLVKFIKFFWNNTHVGRQFCNRLSRIHLYMLTFHTLKKANIIYHTTFSWLNAELLDYLFHLLISLNILFSLWKLLSTVKVSDLNLTDRQKKLLGVDMQSSVDTGLQPQHPHYVSTSKISQMAQNKTHIPQTNLKNHPAYLFKGLETPLKARQREMAEEQTKLQSQSLHTKNVFGTLQRHSGISSTLVSANNDNNSPHTPVTRKGYIPSSKYAYMMNSQSPRGKI.

A disordered region spans residues 1–39; it reads MKIQAGQLGLDDNDVPGPLPDTDSKPSSQSQNDTPMFKL. The segment covering 25–34 has biased composition (polar residues); sequence KPSSQSQNDT. 2 consecutive transmembrane segments (helical) span residues 64 to 84 and 133 to 153; these read IMTN…IKFF and LFHL…LSTV. Ser-270 carries the post-translational modification Phosphoserine. Thr-273 is subject to Phosphothreonine. A phosphoserine mark is found at Ser-292 and Ser-294.

As to quaternary structure, component of the nuclear pore complex (NPC). NPC constitutes the exclusive means of nucleocytoplasmic transport. NPCs allow the passive diffusion of ions and small molecules and the active, nuclear transport receptor-mediated bidirectional transport of macromolecules such as proteins, RNAs, ribonucleoparticles (RNPs), and ribosomal subunits across the nuclear envelope. Due to its 8-fold rotational symmetry, all subunits are present with 8 copies or multiples thereof.

It localises to the nucleus. It is found in the nuclear pore complex. Its subcellular location is the nucleus membrane. Functionally, functions as a component of the nuclear pore complex (NPC). NPC components, collectively referred to as nucleoporins (NUPs), can play the role of both NPC structural components and of docking or interaction partners for transiently associated nuclear transport factors. This Saccharomyces cerevisiae (strain ATCC 204508 / S288c) (Baker's yeast) protein is Nucleoporin POM34 (POM34).